A 169-amino-acid polypeptide reads, in one-letter code: Peptide deformylase (169 aa).

Cys92 and His134 together coordinate Fe cation. The active site involves Glu135. His138 provides a ligand contact to Fe cation.

It belongs to the polypeptide deformylase family. Fe(2+) is required as a cofactor.

The enzyme catalyses N-terminal N-formyl-L-methionyl-[peptide] + H2O = N-terminal L-methionyl-[peptide] + formate. Removes the formyl group from the N-terminal Met of newly synthesized proteins. Requires at least a dipeptide for an efficient rate of reaction. N-terminal L-methionine is a prerequisite for activity but the enzyme has broad specificity at other positions. This chain is Peptide deformylase, found in Cellvibrio japonicus (strain Ueda107) (Pseudomonas fluorescens subsp. cellulosa).